The chain runs to 216 residues: GTP cyclohydrolase 1 (216 aa).

Zn(2+)-binding residues include C108, H111, and C179.

The protein belongs to the GTP cyclohydrolase I family. As to quaternary structure, toroid-shaped homodecamer, composed of two pentamers of five dimers.

The catalysed reaction is GTP + H2O = 7,8-dihydroneopterin 3'-triphosphate + formate + H(+). Its pathway is cofactor biosynthesis; 7,8-dihydroneopterin triphosphate biosynthesis; 7,8-dihydroneopterin triphosphate from GTP: step 1/1. This is GTP cyclohydrolase 1 from Shewanella sp. (strain ANA-3).